Consider the following 545-residue polypeptide: MAEDPYEVGRGVSRAFWADSVADAIEARDPDEPIVIKGGVSPSGVPHIGHFNEIMRGYYVAEALRDRGHEVRQVFTADDKDRLRAVPRQLADLDWNVVGLGEVDAGALGRNLGKPYTDIPDPFGCCDSYGAHFTALLQKSAELVGVDVEFVSNTELYADGEFEAVTRRVLERADRARDVLAEYQNKVDDDYVPFLPQCAECGKITEGVTAVDLDAGEVEYVCEDVEAGDQTIDGCGHEGTATLRDGKLPWRFEWPAQWEILGVDFEPFGKDHAEGSWPSGEDVAENVLDIQPPVPMVYEWFTLDGEPLSSSSGNVITVDEVLDILEPEVFKYFFVKDPRKQRDFSVENIDQLVDEFDRFERRYFEEIEASEDDAELAERAYPMVVDDPREQRIRIPYTFAAVLGMTDDPALREQIARKEGHIPDDAPEWAVEQALARVERAQEWASLTNNEFNYELKRAEIPEVSFDDATAAALDELADFIAEGHDGEAIQSEIYETAKRNDIDISEFFSAGYRLLFDDTEGPQLGTFIAKLDREFVVERFRRNE.

Positions Pro-42–His-50 match the 'HIGH' region motif. The 'KMSKS' region signature appears at Pro-307–Ser-311.

This sequence belongs to the class-I aminoacyl-tRNA synthetase family.

The protein localises to the cytoplasm. It carries out the reaction tRNA(Lys) + L-lysine + ATP = L-lysyl-tRNA(Lys) + AMP + diphosphate. The chain is Lysine--tRNA ligase from Haloarcula marismortui (strain ATCC 43049 / DSM 3752 / JCM 8966 / VKM B-1809) (Halobacterium marismortui).